Consider the following 633-residue polypeptide: Chaperone protein dnaK2 (633 aa).

T197 is modified (phosphothreonine; by autocatalysis). The tract at residues S600–K633 is disordered. A compositionally biased stretch (low complexity) spans D608–E619. Residues G620–K633 are compositionally biased toward acidic residues.

The protein belongs to the heat shock protein 70 family.

In terms of biological role, acts as a chaperone. In Prochlorococcus marinus (strain SARG / CCMP1375 / SS120), this protein is Chaperone protein dnaK2 (dnaK2).